We begin with the raw amino-acid sequence, 205 residues long: MSKSYTLKAEVRERVGKGSSRELRRNGFIPAVIYGDKQPPLAISVPYKEVFYKIHGGGFRTTIATLEIGKEKIQVLPKDYQLDPVRDFPMHVDFLRVSAKSIVHVNIPVHFLNEDTAPGIKRGGVLNIVRHEIECTAPANAIPDAIQIDLSSYSIGDSIHISAVQLPEGVTPVIQDRNFTIATIAAPAGMGDTSEEENNESDAKK.

The protein belongs to the bacterial ribosomal protein bL25 family. CTC subfamily. In terms of assembly, part of the 50S ribosomal subunit; part of the 5S rRNA/L5/L18/L25 subcomplex. Contacts the 5S rRNA. Binds to the 5S rRNA independently of L5 and L18.

In terms of biological role, this is one of the proteins that binds to the 5S RNA in the ribosome where it forms part of the central protuberance. This chain is Large ribosomal subunit protein bL25, found in Bartonella bacilliformis (strain ATCC 35685 / KC583 / Herrer 020/F12,63).